A 78-amino-acid polypeptide reads, in one-letter code: Cytochrome c oxidase subunit 6b-2 (78 aa).

Residues 22-65 (TRHCFTRYIEFHRCTTAKGEESNDCERFAKYYRALCPGEWVDKW) enclose the CHCH domain. The short motif at 25-35 (CFTRYIEFHRC) is the Cx9C motif element. 2 disulfide bridges follow: Cys-25/Cys-57 and Cys-35/Cys-46. The Cx10C motif motif lies at 46–57 (CERFAKYYRALC).

It belongs to the cytochrome c oxidase subunit 6B (TC 3.D.4.8) family. In terms of tissue distribution, specifically expressed in roots.

The protein resides in the mitochondrion. Functionally, this protein is one of the nuclear-coded polypeptide chains of cytochrome c oxidase, the terminal oxidase in mitochondrial electron transport. This protein may be one of the heme-binding subunits of the oxidase. This Arabidopsis thaliana (Mouse-ear cress) protein is Cytochrome c oxidase subunit 6b-2 (COX6B-2).